Consider the following 422-residue polypeptide: UDP-N-acetylglucosamine 1-carboxyvinyltransferase (422 aa).

22–23 (KN) provides a ligand contact to phosphoenolpyruvate. Residue Arg93 participates in UDP-N-acetyl-alpha-D-glucosamine binding. The active-site Proton donor is the Cys117. Cys117 is subject to 2-(S-cysteinyl)pyruvic acid O-phosphothioketal. UDP-N-acetyl-alpha-D-glucosamine contacts are provided by residues 122 to 126 (RPVDQ), Asp309, and Ile331.

Belongs to the EPSP synthase family. MurA subfamily.

The protein localises to the cytoplasm. The enzyme catalyses phosphoenolpyruvate + UDP-N-acetyl-alpha-D-glucosamine = UDP-N-acetyl-3-O-(1-carboxyvinyl)-alpha-D-glucosamine + phosphate. The protein operates within cell wall biogenesis; peptidoglycan biosynthesis. Cell wall formation. Adds enolpyruvyl to UDP-N-acetylglucosamine. This is UDP-N-acetylglucosamine 1-carboxyvinyltransferase from Delftia acidovorans (strain DSM 14801 / SPH-1).